The chain runs to 428 residues: GTPase Obg (428 aa).

The Obg domain maps to 1–158; the sequence is MFVDKVKVYA…RNLLLELKVL (158 aa). The OBG-type G domain maps to 159-329; sequence ADVGLVGFPS…LMLAIADELE (171 aa). Residues 165-172, 190-194, 212-215, 282-285, and 310-312 contribute to the GTP site; these read GFPSVGKS, FTTIT, DLPG, NKMD, and SAI. Residues Ser172 and Thr192 each contribute to the Mg(2+) site. Residues 350–428 form the OCT domain; the sequence is KHELPIEPFT…IMKFEFEFVE (79 aa).

Belongs to the TRAFAC class OBG-HflX-like GTPase superfamily. OBG GTPase family. Monomer. Requires Mg(2+) as cofactor.

It localises to the cytoplasm. Functionally, an essential GTPase which binds GTP, GDP and possibly (p)ppGpp with moderate affinity, with high nucleotide exchange rates and a fairly low GTP hydrolysis rate. Plays a role in control of the cell cycle, stress response, ribosome biogenesis and in those bacteria that undergo differentiation, in morphogenesis control. This Shouchella clausii (strain KSM-K16) (Alkalihalobacillus clausii) protein is GTPase Obg.